We begin with the raw amino-acid sequence, 337 residues long: uncharacterized protein (337 aa).

The protein belongs to the NAD(P)-dependent epimerase/dehydratase family.

This is an uncharacterized protein from Escherichia coli (strain K12).